Reading from the N-terminus, the 418-residue chain is Acyltransferase calJ (418 aa).

S79 functions as the Acyl-ester intermediate in the catalytic mechanism. Substrate is bound by residues R176 and Y191.

This sequence belongs to the class-A beta-lactamase family.

The protein operates within secondary metabolite biosynthesis. Acyltransferase; part of the gene cluster that mediates the biosynthesis of calbistrin A and related compounds. Calbistrin A is a secondary metabolite with an interesting structure that was recently found to have bioactivity against leukemia cells. It consists of two polyketides linked by an ester bond: a bicyclic decalin containing polyketide and a linear 12 carbon dioic acid structure. The polyketide synthase calA is probably responsible for forming the decalin moiety. Because calA lacks a designated enoylreductase (ER) domain, the required activity is provided by the trans-enoyl reductase calK. Following release from the PKS, calF then probably catalyzes the oxidation and the subsequent Diels Alder cycloisomerization that lead to the formation of the decalin moiety. The decalin polyketide backbone includes two C-methyl groups, at C7 and C11 in backbone, of which the C7 position is probably methylated by the methyltransferase domain of calA. A candidate for adding the methyl group at C11, if not done by CalA, is the cluster methyltransferase calH. Several additional tailoring enzymes within the cluster could be involved in the modification of the decalin polyketide product. Those include the 3 cytochrome P450 monooxygenases CalE, CalG and CalL, of which one might be responsible for the introduction of the extra hydroxyl group attached to the backbone of the decalin moiety, at position C9 in the backbone, that allows for attachment of the linear moiety. One tailoring enzyme activity that is expected to be involved in biosynthesis of calbistrin is an acyltransferase for connecting the two polyketide synthase products, and which could be performed by the cluster acyltransferase calJ. The enzyme responsible for the biosynthesis of the linear moiety, probably a second PKS, has not been identified yet. The polypeptide is Acyltransferase calJ (Penicillium decumbens).